The primary structure comprises 206 residues: Protein GrpE (206 aa).

Residues 1–14 (MDKKNEQQEVREEN) are compositionally biased toward basic and acidic residues. Residues 1–56 (MDKKNEQQEVREENDTSINQESETQVELEEEVVNEECETSSEKTDEKEVDDENVTD) form a disordered region. Residues 24-39 (TQVELEEEVVNEECET) are compositionally biased toward acidic residues.

The protein belongs to the GrpE family. In terms of assembly, homodimer.

Its subcellular location is the cytoplasm. In terms of biological role, participates actively in the response to hyperosmotic and heat shock by preventing the aggregation of stress-denatured proteins, in association with DnaK and GrpE. It is the nucleotide exchange factor for DnaK and may function as a thermosensor. Unfolded proteins bind initially to DnaJ; upon interaction with the DnaJ-bound protein, DnaK hydrolyzes its bound ATP, resulting in the formation of a stable complex. GrpE releases ADP from DnaK; ATP binding to DnaK triggers the release of the substrate protein, thus completing the reaction cycle. Several rounds of ATP-dependent interactions between DnaJ, DnaK and GrpE are required for fully efficient folding. This chain is Protein GrpE, found in Clostridioides difficile (strain 630) (Peptoclostridium difficile).